Consider the following 171-residue polypeptide: Glutathione peroxidase-like peroxiredoxin GPX3 (171 aa).

The active-site Cysteine sulfenic acid (-SOH) intermediate is the Cys-43. Cys-43 and Cys-89 are oxidised to a cystine.

The protein belongs to the glutathione peroxidase family. As to quaternary structure, interacts with CAP1 and probably YBP1.

It catalyses the reaction a hydroperoxide + [thioredoxin]-dithiol = an alcohol + [thioredoxin]-disulfide + H2O. Functionally, involved in oxidative stress response and redox homeostasis. Functions as a sensor and transducer of hydroperoxide stress. In response to hydroperoxide stress it oxidizes (activates) the transcription activator CAP1, which is involved in transcription activation of genes of the oxidative stress response pathway. May also play a direct role in hydroperoxide scavenging. The enzyme is not required for the glutaredoxin-mediated antioxidant function. In the presence of peroxides, GPX3 is directly oxidized at Cys-43 to form a cysteine sulfenic acid (-SOH). Cys-43-SOH then forms either an intramolecular disulfide bond (Cys-43 with Cys-89) or a transient, intermolecular disulfide bond with 'Cys-446' of CAP1, which is further resolved into a CAP1 intramolecular disulfide bond ('Cys-303' with 'Cys-598'), which causes its nuclear accumulation and activation, and a reduced Cys-43 in GPX3. Required for C.albicans-mediated macrophage killing. The protein is Glutathione peroxidase-like peroxiredoxin GPX3 of Candida albicans (strain SC5314 / ATCC MYA-2876) (Yeast).